Reading from the N-terminus, the 166-residue chain is Endoribonuclease YbeY (166 aa).

Histidine 132, histidine 136, and histidine 142 together coordinate Zn(2+).

Belongs to the endoribonuclease YbeY family. It depends on Zn(2+) as a cofactor.

The protein localises to the cytoplasm. Functionally, single strand-specific metallo-endoribonuclease involved in late-stage 70S ribosome quality control and in maturation of the 3' terminus of the 16S rRNA. This Clostridium botulinum (strain Loch Maree / Type A3) protein is Endoribonuclease YbeY.